The chain runs to 653 residues: tRNA 5-methylaminomethyl-2-thiouridine biosynthesis bifunctional protein MnmC (653 aa).

The tract at residues 1-233 (MKTAPITPGR…KRDITVARFT (233 aa)) is tRNA (mnm(5)s(2)U34)-methyltransferase. The interval 258 to 653 (IGAGLAGCAA…YALPRWRSDS (396 aa)) is FAD-dependent cmnm(5)s(2)U34 oxidoreductase.

The protein in the N-terminal section; belongs to the methyltransferase superfamily. tRNA (mnm(5)s(2)U34)-methyltransferase family. In the C-terminal section; belongs to the DAO family. FAD serves as cofactor.

It is found in the cytoplasm. The enzyme catalyses 5-aminomethyl-2-thiouridine(34) in tRNA + S-adenosyl-L-methionine = 5-methylaminomethyl-2-thiouridine(34) in tRNA + S-adenosyl-L-homocysteine + H(+). Functionally, catalyzes the last two steps in the biosynthesis of 5-methylaminomethyl-2-thiouridine (mnm(5)s(2)U) at the wobble position (U34) in tRNA. Catalyzes the FAD-dependent demodification of cmnm(5)s(2)U34 to nm(5)s(2)U34, followed by the transfer of a methyl group from S-adenosyl-L-methionine to nm(5)s(2)U34, to form mnm(5)s(2)U34. The sequence is that of tRNA 5-methylaminomethyl-2-thiouridine biosynthesis bifunctional protein MnmC from Methylibium petroleiphilum (strain ATCC BAA-1232 / LMG 22953 / PM1).